Here is a 501-residue protein sequence, read N- to C-terminus: Zinc-binding lipoprotein AdcA (501 aa).

The N-terminal stretch at 1–18 (MKKISLLLASLCALFLVA) is a signal peptide. Cys-19 carries the N-palmitoyl cysteine lipid modification. Cys-19 is lipidated: S-diacylglycerol cysteine. His-63 lines the Zn(2+) pocket. The interval 116-136 (LPGGEEEEGDHDHGEEGHHHE) is disordered. Residues 120-136 (EEEEGDHDHGEEGHHHE) form a his-rich loop region. Residues 125-136 (DHDHGEEGHHHE) are compositionally biased toward basic and acidic residues. Positions 140, 204, and 279 each coordinate Zn(2+).

The protein belongs to the bacterial solute-binding protein 9 family.

The protein localises to the cell membrane. Functionally, part of the ATP-binding cassette (ABC) transport system AdcABC involved in zinc import. Binds zinc with high affinity and specificity and delivers it to the membrane permease for translocation into the cytoplasm. This chain is Zinc-binding lipoprotein AdcA (adcA), found in Streptococcus pneumoniae serotype 4 (strain ATCC BAA-334 / TIGR4).